A 154-amino-acid polypeptide reads, in one-letter code: 6,7-dimethyl-8-ribityllumazine synthase (154 aa).

Residues tryptophan 22, 56-58, and 80-82 each bind 5-amino-6-(D-ribitylamino)uracil; these read AWE and CVV. Residue 85-86 participates in (2S)-2-hydroxy-3-oxobutyl phosphate binding; the sequence is DT. Histidine 88 acts as the Proton donor in catalysis. Position 113 (asparagine 113) interacts with 5-amino-6-(D-ribitylamino)uracil. Arginine 127 contributes to the (2S)-2-hydroxy-3-oxobutyl phosphate binding site.

Belongs to the DMRL synthase family. Forms an icosahedral capsid composed of 60 subunits, arranged as a dodecamer of pentamers.

The enzyme catalyses (2S)-2-hydroxy-3-oxobutyl phosphate + 5-amino-6-(D-ribitylamino)uracil = 6,7-dimethyl-8-(1-D-ribityl)lumazine + phosphate + 2 H2O + H(+). It participates in cofactor biosynthesis; riboflavin biosynthesis; riboflavin from 2-hydroxy-3-oxobutyl phosphate and 5-amino-6-(D-ribitylamino)uracil: step 1/2. Functionally, catalyzes the formation of 6,7-dimethyl-8-ribityllumazine by condensation of 5-amino-6-(D-ribitylamino)uracil with 3,4-dihydroxy-2-butanone 4-phosphate. This is the penultimate step in the biosynthesis of riboflavin. This is 6,7-dimethyl-8-ribityllumazine synthase from Xylella fastidiosa (strain M23).